The chain runs to 239 residues: Ribonuclease PH (239 aa).

Phosphate contacts are provided by residues Arg-88 and 126-128 (GTR).

This sequence belongs to the RNase PH family. Homohexameric ring arranged as a trimer of dimers.

The catalysed reaction is tRNA(n+1) + phosphate = tRNA(n) + a ribonucleoside 5'-diphosphate. In terms of biological role, phosphorolytic 3'-5' exoribonuclease that plays an important role in tRNA 3'-end maturation. Removes nucleotide residues following the 3'-CCA terminus of tRNAs; can also add nucleotides to the ends of RNA molecules by using nucleoside diphosphates as substrates, but this may not be physiologically important. Probably plays a role in initiation of 16S rRNA degradation (leading to ribosome degradation) during starvation. This is Ribonuclease PH from Coxiella burnetii (strain Dugway 5J108-111).